Reading from the N-terminus, the 559-residue chain is Potassium-transporting ATPase potassium-binding subunit (559 aa).

13 helical membrane-spanning segments follow: residues 5-25, 27-47, 63-83, 132-152, 170-190, 253-273, 283-303, 327-347, 356-376, 379-399, 416-436, 484-504, and 524-544; these read GFLL…PLGS, LARL…RILW, LLAL…LLFW, GLTV…FALI, LVRI…LFFI, LAQM…FGEA, LLWA…WAEV, FGVL…CGAV, ALGG…FGGV, GLYG…LMIG, MTAL…ALAM, LLAF…MAIA, and GALF…LTFI.

This sequence belongs to the KdpA family. The system is composed of three essential subunits: KdpA, KdpB and KdpC.

It is found in the cell inner membrane. Functionally, part of the high-affinity ATP-driven potassium transport (or Kdp) system, which catalyzes the hydrolysis of ATP coupled with the electrogenic transport of potassium into the cytoplasm. This subunit binds the periplasmic potassium ions and delivers the ions to the membrane domain of KdpB through an intramembrane tunnel. This is Potassium-transporting ATPase potassium-binding subunit from Salmonella heidelberg (strain SL476).